A 302-amino-acid polypeptide reads, in one-letter code: Sulfate adenylyltransferase subunit 2 (302 aa).

Residues 279-302 (ERQGRAIDHDQSGSMELKKRQGYF) form a disordered region. The segment covering 280 to 302 (RQGRAIDHDQSGSMELKKRQGYF) has biased composition (basic and acidic residues).

Belongs to the PAPS reductase family. CysD subfamily. In terms of assembly, heterodimer composed of CysD, the smaller subunit, and CysN.

The catalysed reaction is sulfate + ATP + H(+) = adenosine 5'-phosphosulfate + diphosphate. Its pathway is sulfur metabolism; hydrogen sulfide biosynthesis; sulfite from sulfate: step 1/3. In terms of biological role, with CysN forms the ATP sulfurylase (ATPS) that catalyzes the adenylation of sulfate producing adenosine 5'-phosphosulfate (APS) and diphosphate, the first enzymatic step in sulfur assimilation pathway. APS synthesis involves the formation of a high-energy phosphoric-sulfuric acid anhydride bond driven by GTP hydrolysis by CysN coupled to ATP hydrolysis by CysD. In Photobacterium profundum (strain SS9), this protein is Sulfate adenylyltransferase subunit 2.